The sequence spans 142 residues: Hemoglobin subunit alpha (142 aa).

Positions 2 to 142 constitute a Globin domain; it reads VLSPADKSNV…VSTVLTSKYR (141 aa). Residue Ser4 is modified to Phosphoserine. Lys8 and Lys12 each carry N6-succinyllysine. N6-acetyllysine; alternate is present on Lys17. Lys17 bears the N6-succinyllysine; alternate mark. Tyr25 carries the phosphotyrosine modification. Phosphoserine is present on Ser36. Lys41 carries the post-translational modification N6-succinyllysine. The residue at position 50 (Ser50) is a Phosphoserine. Position 59 (His59) interacts with O2. A heme b-binding site is contributed by His88. Ser103 is subject to Phosphoserine. Position 109 is a phosphothreonine (Thr109). 2 positions are modified to phosphoserine: Ser125 and Ser132. 2 positions are modified to phosphothreonine: Thr135 and Thr138. Ser139 bears the Phosphoserine mark.

Belongs to the globin family. Heterotetramer of two alpha chains and two beta chains. As to expression, red blood cells.

In terms of biological role, involved in oxygen transport from the lung to the various peripheral tissues. Functionally, hemopressin acts as an antagonist peptide of the cannabinoid receptor CNR1. Hemopressin-binding efficiently blocks cannabinoid receptor CNR1 and subsequent signaling. This is Hemoglobin subunit alpha (HBA) from Chlorocebus aethiops (Green monkey).